The chain runs to 176 residues: Translation initiation factor IF-3 (176 aa).

The protein belongs to the IF-3 family. Monomer.

The protein localises to the cytoplasm. In terms of biological role, IF-3 binds to the 30S ribosomal subunit and shifts the equilibrium between 70S ribosomes and their 50S and 30S subunits in favor of the free subunits, thus enhancing the availability of 30S subunits on which protein synthesis initiation begins. The chain is Translation initiation factor IF-3 from Microcystis aeruginosa (strain NIES-843 / IAM M-2473).